The chain runs to 183 residues: Putative 3-methyladenine DNA glycosylase (183 aa).

It belongs to the DNA glycosylase MPG family.

This chain is Putative 3-methyladenine DNA glycosylase, found in Rickettsia conorii (strain ATCC VR-613 / Malish 7).